A 2304-amino-acid polypeptide reads, in one-letter code: Protein Ycf2 (2304 aa).

1637–1644 (GSIGTGRS) contributes to the ATP binding site.

It belongs to the Ycf2 family.

The protein localises to the plastid. It localises to the chloroplast stroma. Its function is as follows. Probable ATPase of unknown function. Its presence in a non-photosynthetic plant (Epifagus virginiana) and experiments in tobacco indicate that it has an essential function which is probably not related to photosynthesis. The chain is Protein Ycf2 from Amborella trichopoda.